The following is a 277-amino-acid chain: MAAELEYESVLCVKPDVSVYRIPPRASNRGYRASDWKLDQPDWTGRLRITSKGKIAYIKLEDKVSGELFAQAPVEQYPGIAVETVADSSRYFVIRIQDGTGRSAFIGIGFTDRGDAFDFNVSLQDHFKWVKQETEISKESQEMDSRPKLDLGFKEGQTIKLSIGNITAKKGGTSKPRASGTGGLSLLPPPPGGKVTIPPPSSSVAISNHVTPPPIPKSNHGSNDSDILLDLDSPAPVPTSAPAPAPASTSNDLWGDFSTASSSVPNQAPQPSNWVQF.

The interval 164 to 277 (GNITAKKGGT…APQPSNWVQF (114 aa)) is disordered. Over residues 187-201 (LPPPPGGKVTIPPPS) the composition is skewed to pro residues. T211 is modified (phosphothreonine). Over residues 222 to 234 (SNDSDILLDLDSP) the composition is skewed to low complexity. The segment covering 235-245 (APVPTSAPAPA) has biased composition (pro residues). 2 consecutive short sequence motifs (WXXF motif) follow at residues 254–257 (WGDF) and 274–277 (WVQF). The segment covering 258-277 (STASSSVPNQAPQPSNWVQF) has biased composition (polar residues).

Belongs to the NECAP family. As to quaternary structure, interacts with AP1G1 and AP2A1 components of the adapter protein complexes AP-1 and AP-2. Interacts with the GAE domain proteins GGA1, GGA2 and GGA3. Interacts with AP2A2. As to expression, expressed predominantly in brain (at protein level).

Its subcellular location is the cytoplasmic vesicle. It is found in the clathrin-coated vesicle membrane. The protein localises to the cell membrane. Its function is as follows. Involved in endocytosis. The protein is Adaptin ear-binding coat-associated protein 1 (Necap1) of Rattus norvegicus (Rat).